The sequence spans 126 residues: Profilin (126 aa).

This sequence belongs to the profilin family. As to quaternary structure, occurs in many kinds of cells as a complex with monomeric actin in a 1:1 ratio.

Its subcellular location is the cytoplasm. The protein resides in the cytoskeleton. Functionally, binds to actin and affects the structure of the cytoskeleton. At high concentrations, profilin prevents the polymerization of actin, whereas it enhances it at low concentrations. By binding to PIP2, it inhibits the formation of IP3 and DG. The sequence is that of Profilin from Bombyx mori (Silk moth).